The following is a 350-amino-acid chain: Protein RecA (350 aa).

ATP is bound at residue 67 to 74 (GPESSGKT).

This sequence belongs to the RecA family.

It localises to the cytoplasm. In terms of biological role, can catalyze the hydrolysis of ATP in the presence of single-stranded DNA, the ATP-dependent uptake of single-stranded DNA by duplex DNA, and the ATP-dependent hybridization of homologous single-stranded DNAs. It interacts with LexA causing its activation and leading to its autocatalytic cleavage. The sequence is that of Protein RecA from Mycobacterium avium (strain 104).